A 377-amino-acid chain; its full sequence is Protein RecA (377 aa).

65–72 (GPESSGKT) is a binding site for ATP. The interval 329–377 (GDEEAAATKATETKTDAPKDKDKGKTKAKDKPADVTPGQIELAPDKSAK) is disordered. The span at 339 to 361 (TETKTDAPKDKDKGKTKAKDKPA) shows a compositional bias: basic and acidic residues.

The protein belongs to the RecA family.

Its subcellular location is the cytoplasm. Its function is as follows. Can catalyze the hydrolysis of ATP in the presence of single-stranded DNA, the ATP-dependent uptake of single-stranded DNA by duplex DNA, and the ATP-dependent hybridization of homologous single-stranded DNAs. It interacts with LexA causing its activation and leading to its autocatalytic cleavage. This is Protein RecA from Levilactobacillus brevis (strain ATCC 367 / BCRC 12310 / CIP 105137 / JCM 1170 / LMG 11437 / NCIMB 947 / NCTC 947) (Lactobacillus brevis).